The primary structure comprises 921 residues: Inner nuclear membrane protein Man1 (921 aa).

In terms of domain architecture, LEM spans 7–51 (AAAPQQLSDEELFSQLRRYGLSPGPVTESTRPVYLKKLKKLREEE). Phosphoserine is present on Ser28. Disordered stretches follow at residues 47–97 (LREE…AYLR), 136–357 (SSDE…GGCG), and 374–395 (LAPL…PTGP). Low complexity-rich tracts occupy residues 53–62 (QQQQQQQQQQ) and 72–85 (TRNS…TAMG). 3 positions are modified to phosphoserine: Ser136, Ser137, and Ser140. Residues 217 to 237 (AAEDADEELADGEDRDPEAEE) are compositionally biased toward acidic residues. Phosphoserine is present on residues Ser261, Ser263, and Ser287. Acidic residues predominate over residues 263 to 275 (SEEEEEEGEEDGD). Residues 308-317 (SGGSRQETSV) are compositionally biased toward polar residues. The span at 348 to 357 (PGGGGGGGCG) shows a compositional bias: gly residues. At Ser412 the chain carries Phosphoserine. A run of 2 helical transmembrane segments spans residues 486 to 506 (MFLL…YLGM) and 637 to 657 (AFIT…LVCV). Residues 709 to 921 (VRDSLIQPQD…TGLANSQGSS (213 aa)) are interaction with SMAD1, SMAD2, SMAD3 and SMAD5. A DNA-binding region spans residues 717 to 736 (QDRKKMKKVWDRAVDFLAAN). The residue at position 787 (Ser787) is a Phosphoserine. A Phosphothreonine modification is found at Thr893. The residue at position 921 (Ser921) is a Phosphoserine.

In terms of assembly, interacts with SMAD1, SMAD2, SMAD3 and SMAD5. Binds to both phosphorylated and unphosphorylated R-SMADS.

It localises to the nucleus inner membrane. Functionally, can function as a specific repressor of TGF-beta, activin, and BMP signaling through its interaction with the R-SMAD proteins. Antagonizes TGF-beta-induced cell proliferation arrest. The sequence is that of Inner nuclear membrane protein Man1 (Lemd3) from Mus musculus (Mouse).